We begin with the raw amino-acid sequence, 304 residues long: MSWIERIKSNITPTRKASIPEGVWTKCDSCGQVLYRAELERNLEVCPKCDHHMRMSARNRLHSLLDEGSLVELGSELEPKDVLKFRDSKKYKDRLASAQKETGEKDALVVMKGTLHGMPVVAAAFEFAFMGGSMGSVVGARFVRAVEQALEDNCPLVCFSASGGARMQEALMSLMQMAKTSAALAKMQERGLPYISVLTDPTMGGVSASFAMLGDLNIAEPKALIGFAGPRVIEQTVREKLPPGFQRSEFLIEKGAIDMIVRRPEMRLKLASILAKLMNLPAPNPDAPREGVVVPPAPDQESEA.

The region spanning 23–292 (VWTKCDSCGQ…PNPDAPREGV (270 aa)) is the CoA carboxyltransferase N-terminal domain. Zn(2+) contacts are provided by Cys-27, Cys-30, Cys-46, and Cys-49. The C4-type zinc finger occupies 27-49 (CDSCGQVLYRAELERNLEVCPKC). Residues 283-304 (PNPDAPREGVVVPPAPDQESEA) are disordered.

The protein belongs to the AccD/PCCB family. Acetyl-CoA carboxylase is a heterohexamer composed of biotin carboxyl carrier protein (AccB), biotin carboxylase (AccC) and two subunits each of ACCase subunit alpha (AccA) and ACCase subunit beta (AccD). Zn(2+) serves as cofactor.

The protein resides in the cytoplasm. The enzyme catalyses N(6)-carboxybiotinyl-L-lysyl-[protein] + acetyl-CoA = N(6)-biotinyl-L-lysyl-[protein] + malonyl-CoA. Its pathway is lipid metabolism; malonyl-CoA biosynthesis; malonyl-CoA from acetyl-CoA: step 1/1. Its function is as follows. Component of the acetyl coenzyme A carboxylase (ACC) complex. Biotin carboxylase (BC) catalyzes the carboxylation of biotin on its carrier protein (BCCP) and then the CO(2) group is transferred by the transcarboxylase to acetyl-CoA to form malonyl-CoA. This Salmonella agona (strain SL483) protein is Acetyl-coenzyme A carboxylase carboxyl transferase subunit beta.